The primary structure comprises 374 residues: Copper-containing nitrite reductase (374 aa).

The segment at residues 1-31 (MFTRRAALVGAAALASAPLVIRTAGAEEAPA) is a signal peptide (tat-type signal). 2 consecutive Plastocyanin-like domains span residues 93–189 (MTFD…IMVL) and 254–355 (GAVG…VLVE). Residues histidine 126, histidine 131, histidine 166, cysteine 167, histidine 177, methionine 182, and histidine 338 each contribute to the Cu cation site.

This sequence belongs to the multicopper oxidase family. As to quaternary structure, homotrimer. Cu(2+) is required as a cofactor. The cofactor is Cu(+). Requires FAD as cofactor. Predicted to be exported by the Tat system. The position of the signal peptide cleavage has not been experimentally proven.

It localises to the periplasm. The catalysed reaction is nitric oxide + Fe(III)-[cytochrome c] + H2O = Fe(II)-[cytochrome c] + nitrite + 2 H(+). It functions in the pathway nitrogen metabolism; nitrate reduction (denitrification); dinitrogen from nitrate: step 2/4. The chain is Copper-containing nitrite reductase (nirK) from Cereibacter sphaeroides (strain ATCC 17025 / ATH 2.4.3) (Rhodobacter sphaeroides).